The chain runs to 394 residues: Teichoic acid poly(glycerol phosphate) polymerase (394 aa).

This sequence belongs to the CDP-glycerol glycerophosphotransferase family.

It is found in the cell membrane. It catalyses the reaction 4-O-[(2R)-glycerylphospho]-N-acetyl-beta-D-mannosaminyl-(1-&gt;4)-N-acetyl-alpha-D-glucosaminyl di-trans,octa-cis-undecaprenyl diphosphate + n CDP-glycerol = 4-O-{[(2R)-1-glycerylphospho](n)-(2R)-1-glycerylphospho}-N-acetyl-beta-D-mannosaminyl-(1-&gt;4)-N-acetyl-alpha-D-glucosaminyl undecaprenyl diphosphate + n CMP + n H(+). Its function is as follows. Catalyzes the addition of further 2-8 glycerol phosphate units from CDP-glycerol to the single glycerol phosphate unit bound to the prenolpyrophosphate-linked disaccharide. The function in the cell is unknown since the product is not part of the poly(ribitol phosphate) teichoic acid found in the cell walls. This chain is Teichoic acid poly(glycerol phosphate) polymerase (tarF), found in Bacillus spizizenii (strain ATCC 23059 / NRRL B-14472 / W23) (Bacillus subtilis subsp. spizizenii).